The following is a 334-amino-acid chain: Formamidase (334 aa).

Residues 14 to 260 (FLVAAIQFPV…WEIVTGEIYP (247 aa)) form the CN hydrolase domain. The active-site Proton acceptor is the Glu-60. The active-site Proton donor is the Lys-133. The active-site Nucleophile is the Cys-166.

The protein belongs to the carbon-nitrogen hydrolase superfamily. Aliphatic amidase family.

It carries out the reaction formamide + H2O = formate + NH4(+). Is an aliphatic amidase with a restricted substrate specificity, as it only hydrolyzes formamide. The polypeptide is Formamidase (Helicobacter pylori (strain HPAG1)).